The following is a 396-amino-acid chain: Na(+)/H(+) antiporter NhaA (396 aa).

11 helical membrane-spanning segments follow: residues 17–37, 59–79, 97–117, 127–147, 156–176, 181–201, 206–226, 260–280, 292–312, 333–353, and 368–388; these read FSGL…NTNF, FSLT…EIGI, ILPG…YNFI, GWAI…KILG, IFLL…IAFF, IDQY…SINY, CIYI…LSGI, SLSF…NSGI, LLPF…VFLF, IAGI…ISNL, and FSIL…LYFL.

Belongs to the NhaA Na(+)/H(+) (TC 2.A.33) antiporter family.

The protein resides in the cell membrane. It carries out the reaction Na(+)(in) + 2 H(+)(out) = Na(+)(out) + 2 H(+)(in). Its function is as follows. Na(+)/H(+) antiporter that extrudes sodium in exchange for external protons. This is Na(+)/H(+) antiporter NhaA from Wigglesworthia glossinidia brevipalpis.